Reading from the N-terminus, the 86-residue chain is Putative antitoxin VapB36 (86 aa).

In terms of biological role, possibly the antitoxin component of a type II toxin-antitoxin (TA) system. Its cognate toxin is VapC36 (Potential). This Mycobacterium tuberculosis (strain CDC 1551 / Oshkosh) protein is Putative antitoxin VapB36 (vapB36).